The primary structure comprises 232 residues: Charged multivesicular body protein 4c (232 aa).

Disordered stretches follow at residues 1–23 and 172–232; these read MSKL…PSAQ and EQEE…AWAT. The segment at 1–153 is intramolecular interaction with C-terminus; sequence MSKLGKFFKG…EISEAFSQRV (153 aa). Residues 11–23 show a composition bias toward low complexity; that stretch reads SRSSRARAAPSAQ. Coiled-coil stretches lie at residues 21–50 and 125–182; these read SAQE…IQRE and LNKI…KMTS. The interval 154–232 is intramolecular interaction with N-terminus; the sequence is QFADGFDEDE…DFKQLAAWAT (79 aa). The residue at position 210 (S210) is a Phosphoserine; by AURKB.

It belongs to the SNF7 family. In terms of assembly, probable core component of the endosomal sorting required for transport complex III (ESCRT-III). ESCRT-III components are thought to multimerize to form a flat lattice on the perimeter membrane of the endosome. Several assembly forms of ESCRT-III may exist that interact and act sequentially. Self-associates. Interacts with CHMP2A. Interacts with CHMP4A. Interacts with CHMP4B. Interacts with CHMP6. Interacts with VPS4A. Interacts with PDCD6IP; the interaction is direct. Phosphorylated at Ser-210 by AURKB during cytokinesis: together with ZFYVE19/ANCHR, phosphorylated CHMP4C retains abscission-competent VPS4 (VPS4A and/or VPS4B) at the midbody ring until abscission checkpoint signaling is terminated at late cytokinesis.

Its subcellular location is the cytoplasm. The protein resides in the cytosol. It is found in the late endosome membrane. The protein localises to the midbody. It localises to the midbody ring. Probable core component of the endosomal sorting required for transport complex III (ESCRT-III) which is involved in multivesicular bodies (MVBs) formation and sorting of endosomal cargo proteins into MVBs. MVBs contain intraluminal vesicles (ILVs) that are generated by invagination and scission from the limiting membrane of the endosome and mostly are delivered to lysosomes enabling degradation of membrane proteins, such as stimulated growth factor receptors, lysosomal enzymes and lipids. The MVB pathway appears to require the sequential function of ESCRT-O, -I,-II and -III complexes. ESCRT-III proteins mostly dissociate from the invaginating membrane before the ILV is released. The ESCRT machinery also functions in topologically equivalent membrane fission events, such as the terminal stages of cytokinesis. Key component of the cytokinesis checkpoint, a process required to delay abscission to prevent both premature resolution of intercellular chromosome bridges and accumulation of DNA damage: upon phosphorylation by AURKB, together with ZFYVE19/ANCHR, retains abscission-competent VPS4 (VPS4A and/or VPS4B) at the midbody ring until abscission checkpoint signaling is terminated at late cytokinesis. Deactivation of AURKB results in dephosphorylation of CHMP4C followed by its dissociation from ANCHR and VPS4 and subsequent abscission. ESCRT-III proteins are believed to mediate the necessary vesicle extrusion and/or membrane fission activities, possibly in conjunction with the AAA ATPase VPS4. CHMP4A/B/C are required for the exosomal release of SDCBP, CD63 and syndecan. This chain is Charged multivesicular body protein 4c (Chmp4c), found in Rattus norvegicus (Rat).